A 137-amino-acid polypeptide reads, in one-letter code: MLSPKRTKYRKYHRGRMRGKATRGNEVSFGKYGLQALEPSWITSRQIEATRRTITRYTKRGASLWIRIFPDKTVTARAAESRMGSGKGAVDYWVATVKPGTILFEISAVPEEVARAAFNLAAYKLPIKTKFIIRKDI.

This sequence belongs to the universal ribosomal protein uL16 family. As to quaternary structure, part of the 50S ribosomal subunit.

It localises to the plastid. It is found in the chloroplast. This chain is Large ribosomal subunit protein uL16c, found in Thalassiosira pseudonana (Marine diatom).